The following is a 160-amino-acid chain: Serine-protein kinase RsbW (160 aa).

It belongs to the anti-sigma-factor family.

It catalyses the reaction L-seryl-[protein] + ATP = O-phospho-L-seryl-[protein] + ADP + H(+). It carries out the reaction L-threonyl-[protein] + ATP = O-phospho-L-threonyl-[protein] + ADP + H(+). Its function is as follows. Negative regulator of sigma-B activity. Phosphorylates and inactivates its specific antagonist protein, RsbV. Upon phosphorylation of RsbV, RsbW is released and binds to sigma-B, thereby blocking its ability to form an RNA polymerase holoenzyme (E-sigma-B). The polypeptide is Serine-protein kinase RsbW (Bacillus cereus (strain ATCC 10987 / NRS 248)).